Consider the following 307-residue polypeptide: F-box protein PP2-B7 (307 aa).

One can recognise an F-box domain in the interval 37 to 83 (PLSLGDLPEECISLIISFTSPRDACVFALVSKTFESAVQSDIVWEKF).

The protein is F-box protein PP2-B7 (PP2B7) of Arabidopsis thaliana (Mouse-ear cress).